Here is a 473-residue protein sequence, read N- to C-terminus: PTS system trehalose-specific EIIBC component (473 aa).

In terms of domain architecture, PTS EIIB type-1 spans 1–89 (MMSKINQTDI…IASTGQAQVD (89 aa)). Residues 1–110 (MMSKINQTDI…MKWHEQLISH (110 aa)) are Cytoplasmic-facing. Cysteine 29 (phosphocysteine intermediate; for EIIB activity) is an active-site residue. Cysteine 29 is modified (phosphocysteine; by EIIA). Residues 109–473 (SHFAVIFFPL…KYRLGTLDIV (365 aa)) enclose the PTS EIIC type-1 domain. Residues 111 to 131 (FAVIFFPLLPALISGGLILGF) traverse the membrane as a helical segment. Residues 132–158 (RNVIGDLPMSNGQTLAQMYPSLQTIYD) are Periplasmic-facing. A helical membrane pass occupies residues 159 to 179 (FLWLIGEAIFFYLPVGICWSA). Residues 180–187 (VKKMGGTP) are Cytoplasmic-facing. A helical membrane pass occupies residues 188–208 (ILGIVLGVTLVSPQLMNAYLL). The Periplasmic segment spans residues 209–225 (GQQLPEVWDFGMFSIAK). Residues 226 to 246 (VGYQAQVIPALLAGLALGVIE) traverse the membrane as a helical segment. Residues 247-258 (TRLKRIVPDYLY) are Cytoplasmic-facing. Residues 259 to 279 (LVVVPVCSLILAVFLAHALIG) traverse the membrane as a helical segment. Over 280 to 300 (PFGRMIGDGVAFAVRHLMTGS) the chain is Periplasmic. A helical membrane pass occupies residues 301–321 (FAPIGAALFGFLYAPLVITGV). Residues 322 to 340 (HQTTLAIDLQMIQSMGGTP) are Cytoplasmic-facing. The helical transmembrane segment at 341 to 361 (VWPLIALSNIAQGSAVIGIII) threads the bilayer. Residues 362-370 (SSRKHNERE) lie on the Periplasmic side of the membrane. The helical transmembrane segment at 371–391 (ISVPAAISAWLGVTEPAMYGI) threads the bilayer. At 392-398 (NLKYRFP) the chain is on the cytoplasmic side. The helical transmembrane segment at 399 to 419 (MLCAMIGSGLAGLLCGLNGVM) threads the bilayer. Residues 420 to 440 (ANGIGVGGLPGILSIQPSYWQ) are Periplasmic-facing. A helical transmembrane segment spans residues 441–461 (VFALAMAIAIIIPIVLTSFIY). Residues 462–473 (QRKYRLGTLDIV) are Cytoplasmic-facing.

It is found in the cell inner membrane. The catalysed reaction is alpha,alpha-trehalose(out) + N(pros)-phospho-L-histidyl-[protein] = alpha,alpha-trehalose 6-phosphate(in) + L-histidyl-[protein]. The phosphoenolpyruvate-dependent sugar phosphotransferase system (sugar PTS), a major carbohydrate active transport system, catalyzes the phosphorylation of incoming sugar substrates concomitantly with their translocation across the cell membrane. This system is involved in trehalose transport at low osmolarity. This Escherichia coli (strain K12) protein is PTS system trehalose-specific EIIBC component (treB).